Reading from the N-terminus, the 364-residue chain is Developmentally-regulated GTP-binding protein 2 (364 aa).

The residue at position 21 (Lys-21) is a (3S)-3-hydroxylysine. The OBG-type G domain maps to 63–288 (ARVALIGFPS…LLEMLWEYLA (226 aa)). Residues 69–76 (GFPSVGKS), 94–98 (FTTLT), 115–118 (DLPG), 246–249 (NKID), and 269–271 (SCG) each bind GTP. The Mg(2+) site is built by Ser-76 and Thr-96. The TGS domain maps to 288 to 363 (ALTCIYTKKR…EHEDVIQIVK (76 aa)).

This sequence belongs to the TRAFAC class OBG-HflX-like GTPase superfamily. OBG GTPase family. In terms of assembly, interacts with RWDD1; this interaction confers protection to polyubiquitination and proteolytic degradation. Interacts with JMJD7; this interaction is direct. Mg(2+) serves as cofactor. In terms of processing, polyubiquitinated. Post-translationally, hydroxylated (with S stereochemistry) at C-3 of Lys-21 by JMJD7. As to expression, fairly high levels in liver, heart, kidney, and brain. Very low levels in lung, spleen, testis and skeletal muscle.

The protein resides in the nucleus. Its subcellular location is the cytoplasm. It carries out the reaction GTP + H2O = GDP + phosphate + H(+). Its function is as follows. Catalyzes the conversion of GTP to GDP through hydrolysis of the gamma-phosphate bond in GTP. When hydroxylated at C-3 of 'Lys-21' by JMJD7, may bind to RNA and play a role in translation. The polypeptide is Developmentally-regulated GTP-binding protein 2 (Drg2) (Mus musculus (Mouse)).